Here is a 338-residue protein sequence, read N- to C-terminus: Selenocysteine methyltransferase (338 aa).

The 327-residue stretch at 1–327 (MSSPLITDFL…DTIRGIYKIL (327 aa)) folds into the Hcy-binding domain. Residues Cys245, Cys312, and Cys313 each contribute to the Zn(2+) site.

As to quaternary structure, monomer. Zn(2+) is required as a cofactor. Present in all tissues tested.

It catalyses the reaction S-methyl-L-methionine + L-selenocysteine = Se-methyl-L-selenocysteine + L-methionine + H(+). Functionally, catalyzes the methylation of selenocysteine with S-methylmethionine as donor. Does not methylate cysteine. This is Selenocysteine methyltransferase (SMTA) from Astragalus bisulcatus (Two-grooved milkvetch).